Consider the following 363-residue polypeptide: Peptide chain release factor 2 (363 aa).

An N5-methylglutamine modification is found at Q251.

It belongs to the prokaryotic/mitochondrial release factor family. Methylated by PrmC. Methylation increases the termination efficiency of RF2.

The protein resides in the cytoplasm. Its function is as follows. Peptide chain release factor 2 directs the termination of translation in response to the peptide chain termination codons UGA and UAA. The polypeptide is Peptide chain release factor 2 (Helicobacter pylori (strain G27)).